We begin with the raw amino-acid sequence, 260 residues long: Thiamine thiazole synthase (260 aa).

NAD(+) contacts are provided by residues Ser41, 60–61 (ER), Gly68, Val131, and 159–161 (HVD). Residues Asp161 and His176 each coordinate Fe cation. NAD(+) is bound at residue Met225. Arg235 lines the glycine pocket.

This sequence belongs to the THI4 family. In terms of assembly, homooctamer; tetramer of dimers. Requires Fe(2+) as cofactor.

It carries out the reaction hydrogen sulfide + glycine + NAD(+) = ADP-5-ethyl-4-methylthiazole-2-carboxylate + nicotinamide + 3 H2O + H(+). The protein operates within cofactor biosynthesis; thiamine diphosphate biosynthesis. Its function is as follows. Involved in the biosynthesis of the thiazole moiety of thiamine. Catalyzes the conversion of NAD and glycine to adenosine diphosphate 5-(2-hydroxyethyl)-4-methylthiazole-2-carboxylate (ADT), an adenylated thiazole intermediate, using free sulfide as a source of sulfur. In Archaeoglobus fulgidus (strain ATCC 49558 / DSM 4304 / JCM 9628 / NBRC 100126 / VC-16), this protein is Thiamine thiazole synthase.